Reading from the N-terminus, the 425-residue chain is Serine--tRNA ligase (425 aa).

Position 231-233 (231-233 (TAE)) interacts with L-serine. 262 to 264 (RSE) is an ATP binding site. Residue Glu285 participates in L-serine binding. ATP is bound at residue 349 to 352 (EISS). Ser385 provides a ligand contact to L-serine.

The protein belongs to the class-II aminoacyl-tRNA synthetase family. Type-1 seryl-tRNA synthetase subfamily. In terms of assembly, homodimer. The tRNA molecule binds across the dimer.

The protein localises to the cytoplasm. The enzyme catalyses tRNA(Ser) + L-serine + ATP = L-seryl-tRNA(Ser) + AMP + diphosphate + H(+). The catalysed reaction is tRNA(Sec) + L-serine + ATP = L-seryl-tRNA(Sec) + AMP + diphosphate + H(+). The protein operates within aminoacyl-tRNA biosynthesis; selenocysteinyl-tRNA(Sec) biosynthesis; L-seryl-tRNA(Sec) from L-serine and tRNA(Sec): step 1/1. Its function is as follows. Catalyzes the attachment of serine to tRNA(Ser). Is also able to aminoacylate tRNA(Sec) with serine, to form the misacylated tRNA L-seryl-tRNA(Sec), which will be further converted into selenocysteinyl-tRNA(Sec). The chain is Serine--tRNA ligase from Bacillus velezensis (strain DSM 23117 / BGSC 10A6 / LMG 26770 / FZB42) (Bacillus amyloliquefaciens subsp. plantarum).